The primary structure comprises 225 residues: UPF0758 protein Shew185_0376 (225 aa).

Positions 102-224 (VLTNPDLTRD…IVSFAERGWI (123 aa)) constitute an MPN domain. Zn(2+)-binding residues include His173, His175, and Asp186. The JAMM motif motif lies at 173–186 (HNHPSGNAEPSQAD).

The protein belongs to the UPF0758 family.

This Shewanella baltica (strain OS185) protein is UPF0758 protein Shew185_0376.